The primary structure comprises 1202 residues: Inner capsid protein VP3 (1202 aa).

Disordered regions lie at residues 1 to 45 (MRPI…SGKI) and 73 to 99 (YTSKDSVQHGGSSITYTSNTTGNPRVT). Over residues 10 to 21 (NQERTTTKHQET) the composition is skewed to basic and acidic residues. Polar residues predominate over residues 27–45 (NEQTTSDQRFTRSSNSGKI).

This sequence belongs to the turreted BTV-fold inner capsid family. In terms of assembly, homodecamer; each decamer is made up of two conformers of VP2, called VP2A and VP2B. 12 homodecamers assemble to form an icosahedral capsid.

It localises to the virion. Inner capsid protein that self-assembles to form an icosahedral capsid with a T=2 symmetry, which consists of 120 copies of VP2, with channels at each of its five-fold vertices. This capsid constitutes the innermost concentric layer of the viral mature particle. The sequence is that of Inner capsid protein VP3 (S3) from Aedes pseudoscutellaris reovirus (isolate France) (ApRV).